The sequence spans 371 residues: Gustatory and pheromone receptor 39a, isoform A (371 aa).

Over 1–41 (MSKVCRDLRIYLRLLHIMGMMCWHFDSDHCQLVATSGSERY) the chain is Cytoplasmic. Residues 42 to 62 (AVVYAGCILVSTTAGFIFALL) form a helical membrane-spanning segment. The Extracellular portion of the chain corresponds to 63-80 (HPSRFHIAIYNQTGNFYE). Asn73 carries N-linked (GlcNAc...) asparagine glycosylation. The helical transmembrane segment at 81–101 (AVIFRSTCVVLFLVYVILYAW) threads the bilayer. Topologically, residues 102–127 (RHRYRDLVQHILRLNRRCASSCTNQQ) are cytoplasmic. Residues 128 to 148 (FLHNIILYGMLTILCFGNYLH) traverse the membrane as a helical segment. Topologically, residues 149 to 161 (GYTRAGLATLPLA) are extracellular. Residues 162 to 182 (LCMLVYIFAFLVLCLLLMFFV) form a helical membrane-spanning segment. The Cytoplasmic portion of the chain corresponds to 183 to 228 (SLKQVMTAGLIHYNQQLCQGDLISGLRGRQQILKLCGGELNECFGL). Residues 229 to 249 (LMLPIVALVLLMAPSGPFFLI) form a helical membrane-spanning segment. Topologically, residues 250–263 (STVLEGKFRPDECL) are extracellular. Residues 264–284 (IMLLTSSTWDTPWMIMLVLML) traverse the membrane as a helical segment. Residues 285 to 340 (RTNGISEEANKTAKMLTKVPRTGTGLDRMIEKFLLKNLRQKPILTAYGFFALDKST) lie on the Cytoplasmic side of the membrane. The helical transmembrane segment at 341–361 (LFKLFTAIFTYMVILVQFKEM) threads the bilayer. Over 362–371 (ENSTKSINKF) the chain is Extracellular. N-linked (GlcNAc...) asparagine glycosylation is present at Asn363.

The protein belongs to the insect chemoreceptor superfamily. Gustatory receptor (GR) family. Gr21a subfamily. Expressed in the adult labellar chemosensory neurons, and adult thorax and wing. In larvae, is expressed in neurons of the posterior pharyngeal sense organ.

It is found in the cell membrane. In terms of biological role, gustatory receptor which mediates acceptance or avoidance behavior, depending on its substrates. Plays a role in sustaining courtship behavior in males, possibly through the reception of a stimulating arrestant pheromone. In Drosophila melanogaster (Fruit fly), this protein is Gustatory and pheromone receptor 39a, isoform A (Gr39a).